The following is a 276-amino-acid chain: Large ribosomal subunit protein uL2 (276 aa).

Residues 224–276 are disordered; that stretch reads AMNPIDHPHGGGEGKTSGGRNPVTPWGVPTKGKKTRKRNKSSNKYIKRVSDKG. Basic residues predominate over residues 254–270; sequence KGKKTRKRNKSSNKYIK.

Belongs to the universal ribosomal protein uL2 family. Part of the 50S ribosomal subunit. Forms a bridge to the 30S subunit in the 70S ribosome.

In terms of biological role, one of the primary rRNA binding proteins. Required for association of the 30S and 50S subunits to form the 70S ribosome, for tRNA binding and peptide bond formation. It has been suggested to have peptidyltransferase activity; this is somewhat controversial. Makes several contacts with the 16S rRNA in the 70S ribosome. This Ehrlichia chaffeensis (strain ATCC CRL-10679 / Arkansas) protein is Large ribosomal subunit protein uL2.